Here is a 303-residue protein sequence, read N- to C-terminus: MPKILDGKKLAQEIELILQQAIESGLEVAKRRPGLAVLRVGDDPASGVYVNYKEKACDRIGVRSFAKHLKEDISLEELTEIIKSLNEEKNVDGILLQLPLPSHLDETALLRSIDPDKDADGLHPLNLGRLIKGEKGPRSCTPAGVMSLLERNQIKIEGKRAVVVGRSILVGKPMALMLEAANATVTIAHSKTKDLPSLTKEADLLVVAAGKPYLIGENHVSENCVVIDVGIHRLPPDEENMKELKKTKLCGDVKIFEIEDKVAAYSPVPGGVGPMTVTMLLANTVDRWQKHCGLPLTISHLLP.

NADP(+)-binding positions include 165 to 167, Ser-190, and Ile-231; that span reads GRS.

The protein belongs to the tetrahydrofolate dehydrogenase/cyclohydrolase family. In terms of assembly, homodimer.

The enzyme catalyses (6R)-5,10-methylene-5,6,7,8-tetrahydrofolate + NADP(+) = (6R)-5,10-methenyltetrahydrofolate + NADPH. The catalysed reaction is (6R)-5,10-methenyltetrahydrofolate + H2O = (6R)-10-formyltetrahydrofolate + H(+). It functions in the pathway one-carbon metabolism; tetrahydrofolate interconversion. Its function is as follows. Catalyzes the oxidation of 5,10-methylenetetrahydrofolate to 5,10-methenyltetrahydrofolate and then the hydrolysis of 5,10-methenyltetrahydrofolate to 10-formyltetrahydrofolate. The polypeptide is Bifunctional protein FolD (Prochlorococcus marinus (strain NATL2A)).